The primary structure comprises 482 residues: Zinc finger CCCH domain-containing protein 40 (482 aa).

Residues 157 to 184 (RNRAHVCSFYVRGECTRGAECPYRHEMP) form a C3H1-type zinc finger. The 74-residue stretch at 228–301 (RTLYIGGLNN…IRLKLMWGKP (74 aa)) folds into the RRM domain. Composition is skewed to low complexity over residues 329-347 (SQQQ…GQQQ) and 389-428 (PGPQ…YGGY). The tract at residues 329–482 (SQQQSGDQPQ…VPPPQQTTQN (154 aa)) is disordered. Pro residues predominate over residues 429 to 446 (MPPPRMPYPPPPQYPPYQ). Residues 452 to 466 (PAQSQASSSQQPAPA) are compositionally biased toward low complexity. Positions 473 to 482 (VPPPQQTTQN) are enriched in pro residues.

This Oryza sativa subsp. japonica (Rice) protein is Zinc finger CCCH domain-containing protein 40.